The following is a 344-amino-acid chain: UDP-3-O-acylglucosamine N-acyltransferase (344 aa).

H236 serves as the catalytic Proton acceptor.

Belongs to the transferase hexapeptide repeat family. LpxD subfamily. As to quaternary structure, homotrimer.

It carries out the reaction a UDP-3-O-[(3R)-3-hydroxyacyl]-alpha-D-glucosamine + a (3R)-hydroxyacyl-[ACP] = a UDP-2-N,3-O-bis[(3R)-3-hydroxyacyl]-alpha-D-glucosamine + holo-[ACP] + H(+). The protein operates within bacterial outer membrane biogenesis; LPS lipid A biosynthesis. In terms of biological role, catalyzes the N-acylation of UDP-3-O-acylglucosamine using 3-hydroxyacyl-ACP as the acyl donor. Is involved in the biosynthesis of lipid A, a phosphorylated glycolipid that anchors the lipopolysaccharide to the outer membrane of the cell. The sequence is that of UDP-3-O-acylglucosamine N-acyltransferase from Nitratidesulfovibrio vulgaris (strain ATCC 29579 / DSM 644 / CCUG 34227 / NCIMB 8303 / VKM B-1760 / Hildenborough) (Desulfovibrio vulgaris).